The sequence spans 149 residues: Large ribosomal subunit protein bL9 (149 aa).

The protein belongs to the bacterial ribosomal protein bL9 family.

Its function is as follows. Binds to the 23S rRNA. The chain is Large ribosomal subunit protein bL9 from Persephonella marina (strain DSM 14350 / EX-H1).